The following is a 208-amino-acid chain: FMN-dependent NADH:quinone oxidoreductase 2 (208 aa).

This sequence belongs to the azoreductase type 1 family. In terms of assembly, homodimer. FMN is required as a cofactor.

The enzyme catalyses 2 a quinone + NADH + H(+) = 2 a 1,4-benzosemiquinone + NAD(+). It carries out the reaction N,N-dimethyl-1,4-phenylenediamine + anthranilate + 2 NAD(+) = 2-(4-dimethylaminophenyl)diazenylbenzoate + 2 NADH + 2 H(+). Quinone reductase that provides resistance to thiol-specific stress caused by electrophilic quinones. Its function is as follows. Also exhibits azoreductase activity. Catalyzes the reductive cleavage of the azo bond in aromatic azo compounds to the corresponding amines. The chain is FMN-dependent NADH:quinone oxidoreductase 2 from Bacillus cereus (strain ATCC 10987 / NRS 248).